A 213-amino-acid polypeptide reads, in one-letter code: ATP phosphoribosyltransferase (213 aa).

Belongs to the ATP phosphoribosyltransferase family. Short subfamily. As to quaternary structure, heteromultimer composed of HisG and HisZ subunits.

It is found in the cytoplasm. The enzyme catalyses 1-(5-phospho-beta-D-ribosyl)-ATP + diphosphate = 5-phospho-alpha-D-ribose 1-diphosphate + ATP. It participates in amino-acid biosynthesis; L-histidine biosynthesis; L-histidine from 5-phospho-alpha-D-ribose 1-diphosphate: step 1/9. Its function is as follows. Catalyzes the condensation of ATP and 5-phosphoribose 1-diphosphate to form N'-(5'-phosphoribosyl)-ATP (PR-ATP). Has a crucial role in the pathway because the rate of histidine biosynthesis seems to be controlled primarily by regulation of HisG enzymatic activity. The polypeptide is ATP phosphoribosyltransferase (hisG) (Listeria innocua serovar 6a (strain ATCC BAA-680 / CLIP 11262)).